The chain runs to 302 residues: Beta-casein (302 aa).

The signal sequence occupies residues 1-15; it reads MKLLILTCLVALGFA. 2 positions are modified to phosphoserine: Ser-23 and Ser-25. Tandem repeats lie at residues 144 to 151, 152 to 159, 160 to 167, 168 to 175, 176 to 182, 183 to 190, 191 to 198, 199 to 204, 205 to 214, 215 to 222, 223 to 230, 231 to 238, 241 to 247, 248 to 255, 256 to 262, and 263 to 269. Residues 144–269 are 16 X approximate tandem repeats; sequence KREMLPIYER…LLPEEILPVN (126 aa).

It belongs to the beta-casein family. As to expression, mammary gland specific. Secreted in milk.

It is found in the secreted. Its function is as follows. Important role in determination of the surface properties of the casein micelles. This Notamacropus eugenii (Tammar wallaby) protein is Beta-casein (CSN2).